A 527-amino-acid chain; its full sequence is Oviduct-specific glycoprotein (527 aa).

An N-terminal signal peptide occupies residues 1–21; that stretch reads MGKLLLWVGLVLVLKHHNGAA. The region spanning 22–385 is the GH18 domain; the sequence is HKLVCYFANW…YMLNDLLLKA (364 aa). An intrachain disulfide couples cysteine 26 to cysteine 51. Asparagine 62 is a glycosylation site (N-linked (GlcNAc...) asparagine). Residues 71-72, 98-101, tyrosine 142, 211-214, and tryptophan 355 each bind chitin; these read AR, GGWN, and LSYD. 2 N-linked (GlcNAc...) asparagine glycosylation sites follow: asparagine 402 and asparagine 441. The interval 433–527 is disordered; the sequence is TETHGRSDNM…MTLPSGKRSD (95 aa).

The protein belongs to the glycosyl hydrolase 18 family. In terms of tissue distribution, oviduct.

Its subcellular location is the cytoplasmic vesicle. It is found in the secretory vesicle. Functionally, binds to oocyte zona pellucida in vivo. May play a role in the fertilization process and/or early embryonic development. This Sus scrofa (Pig) protein is Oviduct-specific glycoprotein (OVGP1).